Here is a 142-residue protein sequence, read N- to C-terminus: Large ribosomal subunit protein bL17 (142 aa).

This sequence belongs to the bacterial ribosomal protein bL17 family. In terms of assembly, part of the 50S ribosomal subunit. Contacts protein L32.

The chain is Large ribosomal subunit protein bL17 from Chlamydia felis (strain Fe/C-56) (Chlamydophila felis).